The primary structure comprises 101 residues: uncharacterized protein (101 aa).

This is an uncharacterized protein from Homo sapiens (Human).